The sequence spans 241 residues: LexA repressor (241 aa).

The H-T-H motif DNA-binding region spans 26-46 (FDEMKTALDLRSKSGIHRLIT). Catalysis depends on for autocatalytic cleavage activity residues serine 162 and lysine 200.

The protein belongs to the peptidase S24 family. Homodimer.

The catalysed reaction is Hydrolysis of Ala-|-Gly bond in repressor LexA.. Functionally, represses a number of genes involved in the response to DNA damage (SOS response), including recA and lexA. In the presence of single-stranded DNA, RecA interacts with LexA causing an autocatalytic cleavage which disrupts the DNA-binding part of LexA, leading to derepression of the SOS regulon and eventually DNA repair. This chain is LexA repressor, found in Ruegeria sp. (strain TM1040) (Silicibacter sp.).